A 188-amino-acid polypeptide reads, in one-letter code: UPF0301 protein XF_2228 (188 aa).

The protein belongs to the UPF0301 (AlgH) family.

The sequence is that of UPF0301 protein XF_2228 from Xylella fastidiosa (strain 9a5c).